The sequence spans 200 residues: Small ribosomal subunit protein uS4 (200 aa).

The disordered stretch occupies residues 21–42 (GTGKELQKRPYPPGQHGPGQRR). Residues 92–155 (SRLDNLVYRL…RNLQVIKEAI (64 aa)) enclose the S4 RNA-binding domain.

The protein belongs to the universal ribosomal protein uS4 family. In terms of assembly, part of the 30S ribosomal subunit. Contacts protein S5. The interaction surface between S4 and S5 is involved in control of translational fidelity.

In terms of biological role, one of the primary rRNA binding proteins, it binds directly to 16S rRNA where it nucleates assembly of the body of the 30S subunit. Functionally, with S5 and S12 plays an important role in translational accuracy. This is Small ribosomal subunit protein uS4 from Geobacillus thermodenitrificans (strain NG80-2).